The sequence spans 196 residues: Recombination protein RecR (196 aa).

The C4-type zinc-finger motif lies at 57 to 72 (CERCNTFTEAPVCSTC). In terms of domain architecture, Toprim spans 80-175 (RQLCVVETPA…SVTRLARGVP (96 aa)).

The protein belongs to the RecR family.

In terms of biological role, may play a role in DNA repair. It seems to be involved in an RecBC-independent recombinational process of DNA repair. It may act with RecF and RecO. This chain is Recombination protein RecR, found in Methylibium petroleiphilum (strain ATCC BAA-1232 / LMG 22953 / PM1).